The primary structure comprises 518 residues: T-box transcription factor TBX5 (518 aa).

The segment at 1–46 (MADADEGFGLAHTPLEPDAKDLPCDSKPESALGAPSKSPSSPQAAF) is disordered. Positions 15 to 28 (LEPDAKDLPCDSKP) are enriched in basic and acidic residues. The segment covering 34–45 (APSKSPSSPQAA) has biased composition (low complexity). The T-box DNA-binding region spans 58-238 (LHERELWLKF…NNPFAKGFRG (181 aa)). Residues 250-356 (MQSKEYPVVP…PSEEDSFYRS (107 aa)) are disordered. The segment covering 262–301 (TVRQKVASNHSPFSSESRALSTSSNLGSQYQCENGVSGPS) has biased composition (polar residues). Residue Lys339 is modified to N6-acetyllysine.

As to quaternary structure, monomer. Homodimer (via the T-box); binds DNA as homodimer. Interacts (via the T-box) with NKX2-5 (via the homeobox); this complex binds DNA. Interacts with GATA4. Interacts with KAT2A and KAT2B. In terms of processing, acetylation at Lys-339 by KAT2A and KAT2B promotes nuclear retention.

The protein resides in the nucleus. It localises to the cytoplasm. DNA-binding protein that regulates the transcription of several genes and is involved in heart development and limb pattern formation. Binds to the core DNA motif of NPPA promoter. The protein is T-box transcription factor TBX5 (TBX5) of Homo sapiens (Human).